A 446-amino-acid chain; its full sequence is Phosphoglucosamine mutase (446 aa).

Residue serine 102 is the Phosphoserine intermediate of the active site. The Mg(2+) site is built by serine 102, aspartate 241, aspartate 243, and aspartate 245. Residue serine 102 is modified to Phosphoserine.

Belongs to the phosphohexose mutase family. The cofactor is Mg(2+). Activated by phosphorylation.

The enzyme catalyses alpha-D-glucosamine 1-phosphate = D-glucosamine 6-phosphate. Its function is as follows. Catalyzes the conversion of glucosamine-6-phosphate to glucosamine-1-phosphate. This is Phosphoglucosamine mutase from Yersinia pseudotuberculosis serotype O:1b (strain IP 31758).